The primary structure comprises 87 residues: Cell division topological specificity factor (87 aa).

It belongs to the MinE family.

Functionally, prevents the cell division inhibition by proteins MinC and MinD at internal division sites while permitting inhibition at polar sites. This ensures cell division at the proper site by restricting the formation of a division septum at the midpoint of the long axis of the cell. This chain is Cell division topological specificity factor, found in Neisseria gonorrhoeae (strain ATCC 700825 / FA 1090).